A 195-amino-acid polypeptide reads, in one-letter code: Holliday junction branch migration complex subunit RuvA (195 aa).

Positions M1–S64 are domain I. Positions D65–A139 are domain II. The flexible linker stretch occupies residues A139–T143. The segment at S144–A195 is domain III.

The protein belongs to the RuvA family. Homotetramer. Forms an RuvA(8)-RuvB(12)-Holliday junction (HJ) complex. HJ DNA is sandwiched between 2 RuvA tetramers; dsDNA enters through RuvA and exits via RuvB. An RuvB hexamer assembles on each DNA strand where it exits the tetramer. Each RuvB hexamer is contacted by two RuvA subunits (via domain III) on 2 adjacent RuvB subunits; this complex drives branch migration. In the full resolvosome a probable DNA-RuvA(4)-RuvB(12)-RuvC(2) complex forms which resolves the HJ.

It is found in the cytoplasm. Its function is as follows. The RuvA-RuvB-RuvC complex processes Holliday junction (HJ) DNA during genetic recombination and DNA repair, while the RuvA-RuvB complex plays an important role in the rescue of blocked DNA replication forks via replication fork reversal (RFR). RuvA specifically binds to HJ cruciform DNA, conferring on it an open structure. The RuvB hexamer acts as an ATP-dependent pump, pulling dsDNA into and through the RuvAB complex. HJ branch migration allows RuvC to scan DNA until it finds its consensus sequence, where it cleaves and resolves the cruciform DNA. The sequence is that of Holliday junction branch migration complex subunit RuvA from Chloroflexus aggregans (strain MD-66 / DSM 9485).